The primary structure comprises 832 residues: Receptor-interacting serine/threonine-protein kinase 4 (832 aa).

Residues 22-286 enclose the Protein kinase domain; that stretch reads FTGWEKVGSG…QGNGLNGELI (265 aa). ATP-binding positions include 28 to 36 and Lys-51; that span reads VGSGGFGQV. Residue Lys-51 forms a Glycyl lysine isopeptide (Lys-Gly) (interchain with G-Cter in ubiquitin) linkage. The active-site Proton acceptor is the Asp-143. A Glycyl lysine isopeptide (Lys-Gly) (interchain with G-Cter in ubiquitin) cross-link involves residue Lys-145. Disordered stretches follow at residues 325-368 and 389-424; these read QEIT…RLKR and SGVS…GVSS. Over residues 329-342 the composition is skewed to acidic residues; that stretch reads SETEDLCEKPDDEV. The span at 343 to 359 shows a compositional bias: basic and acidic residues; that stretch reads KETAHDLDVKSPPEPRS. Residues 403-424 are compositionally biased toward low complexity; sequence RSSSESKLPSSGSGKRLSGVSS. 10 ANK repeats span residues 485–514, 518–547, 551–580, 584–613, 617–647, 651–680, 684–713, 717–746, 750–780, and 782–811; these read SGAS…NPNL, RGST…SVNA, DQWT…SVNE, EGRT…DVSL, DAWL…SVNA, DGRT…DVNV, LAQT…GKEA, DGYT…DVLA, LNQT…DLFD, and QGLS…HINL.

Belongs to the protein kinase superfamily. TKL Ser/Thr protein kinase family. As to quaternary structure, interacts with PRKCB. Interacts with TRAF1, TRAF2, TRAF3 and TRAF5. Interacts with BIRC2/c-IAP1, BIRC3/c-IAP2 and XIAP/BIRC4. Post-translationally, may be phosphorylated by MAP3K2 and MAP3K3. In terms of processing, proteolytically cleaved by during Fas-induced apoptosis. Cleavage at Asp-388 and Asp-426. Polyubiquitinated with 'Lys-48' and 'Lys-63'-linked chains by BIRC2/c-IAP1 and BIRC3/c-IAP2, leading to activation of NF-kappa-B. In terms of tissue distribution, expressed in hair follicles and skin.

Its subcellular location is the cytoplasm. It localises to the membrane. It carries out the reaction L-seryl-[protein] + ATP = O-phospho-L-seryl-[protein] + ADP + H(+). The catalysed reaction is L-threonyl-[protein] + ATP = O-phospho-L-threonyl-[protein] + ADP + H(+). In terms of biological role, serine/threonine protein kinase. Required for embryonic skin development and correct skin homeostasis in adults, via phosphorylation of PKP1 and subsequent promotion of keratinocyte differentiation and cell adhesion. It is a direct transcriptional target of TP63. Plays a role in NF-kappa-B activation. The polypeptide is Receptor-interacting serine/threonine-protein kinase 4 (RIPK4) (Homo sapiens (Human)).